The following is a 180-amino-acid chain: UPF0340 protein LACR_0494 (180 aa).

Belongs to the UPF0340 family.

The protein is UPF0340 protein LACR_0494 of Lactococcus lactis subsp. cremoris (strain SK11).